Consider the following 292-residue polypeptide: RNA 5'-monophosphate methyltransferase (292 aa).

The segment at 1 to 22 is disordered; the sequence is MAASTEQATGGVEKTAAEEKPR. S-adenosyl-L-methionine contacts are provided by residues arginine 46, asparagine 76, aspartate 110, 135–136, and methionine 164; that span reads DF. In terms of domain architecture, Bin3-type SAM spans 53-274; that stretch reads ELLRRLFPQS…KQATETHPIP (222 aa).

Belongs to the methyltransferase superfamily. Interacts with DICER1; the interaction may be mediated by RNA.

Its subcellular location is the cytoplasm. It carries out the reaction a 5'-end 5'-phospho-ribonucleoside-RNA + S-adenosyl-L-methionine = a 5'-end (5'-methylphospho)-ribonucleoside-RNA + S-adenosyl-L-homocysteine. The enzyme catalyses a 5'-end 5'-phospho-ribonucleoside-RNA + 2 S-adenosyl-L-methionine = a 5'-end (5'-bismethylphospho)-ribonucleoside-RNA + 2 S-adenosyl-L-homocysteine. Its function is as follows. O-methyltransferase that specifically monomethylates 5'-monophosphate of cytoplasmic histidyl tRNA (tRNA(His)), acting as a capping enzyme by protecting tRNA(His) from cleavage by DICER1. Also able, with less efficiently, to methylate the 5' monophosphate of a subset of pre-miRNAs, acting as a negative regulator of miRNA processing. The 5' monophosphate of pre-miRNAs is recognized by DICER1 and is required for pre-miRNAs processing: methylation at this position reduces the processing of pre-miRNAs by DICER1. Was also reported to mediate dimethylation of pre-miR-145; however dimethylation cannot be reproduced by another group which observes a monomethylation of pre-miR-145. This is RNA 5'-monophosphate methyltransferase (BCDIN3D) from Bos taurus (Bovine).